The chain runs to 258 residues: Imidazole glycerol phosphate synthase subunit HisF (258 aa).

Active-site residues include Asp-11 and Asp-130.

It belongs to the HisA/HisF family. Heterodimer of HisH and HisF.

The protein localises to the cytoplasm. The catalysed reaction is 5-[(5-phospho-1-deoxy-D-ribulos-1-ylimino)methylamino]-1-(5-phospho-beta-D-ribosyl)imidazole-4-carboxamide + L-glutamine = D-erythro-1-(imidazol-4-yl)glycerol 3-phosphate + 5-amino-1-(5-phospho-beta-D-ribosyl)imidazole-4-carboxamide + L-glutamate + H(+). Its pathway is amino-acid biosynthesis; L-histidine biosynthesis; L-histidine from 5-phospho-alpha-D-ribose 1-diphosphate: step 5/9. Its function is as follows. IGPS catalyzes the conversion of PRFAR and glutamine to IGP, AICAR and glutamate. The HisF subunit catalyzes the cyclization activity that produces IGP and AICAR from PRFAR using the ammonia provided by the HisH subunit. In Methylorubrum populi (strain ATCC BAA-705 / NCIMB 13946 / BJ001) (Methylobacterium populi), this protein is Imidazole glycerol phosphate synthase subunit HisF.